Reading from the N-terminus, the 399-residue chain is Elongation factor Tu (399 aa).

Positions 10–209 (KPHVNIGTIG…AVDSYIPTPV (200 aa)) constitute a tr-type G domain. The tract at residues 19 to 26 (GHVDHGKT) is G1. 19-26 (GHVDHGKT) contacts GTP. Threonine 26 is a Mg(2+) binding site. The segment at 60–64 (GITIA) is G2. The segment at 81–84 (DCPG) is G3. GTP contacts are provided by residues 81–85 (DCPGH) and 136–139 (NKAD). The segment at 136–139 (NKAD) is G4. The G5 stretch occupies residues 174 to 176 (SAL).

It belongs to the TRAFAC class translation factor GTPase superfamily. Classic translation factor GTPase family. EF-Tu/EF-1A subfamily. In terms of assembly, monomer.

It is found in the cytoplasm. The enzyme catalyses GTP + H2O = GDP + phosphate + H(+). Functionally, GTP hydrolase that promotes the GTP-dependent binding of aminoacyl-tRNA to the A-site of ribosomes during protein biosynthesis. This is Elongation factor Tu from Campylobacter fetus subsp. fetus (strain 82-40).